Reading from the N-terminus, the 195-residue chain is PBAN-type neuropeptides (195 aa).

Positions 1–33 are cleaved as a signal peptide; sequence MIGFAVFSSFNRFTTIFVCVLLCVVYLLSYASG. The propeptide occupies 34–63; that stretch reads EYDGRDSSSGSNNDRAPSNEFGSCTDGKCI. L80 carries the post-translational modification Leucine amide. The propeptide occupies 86–117; sequence ADRKPEINSDIEAFANAFEEPHWAIVTIPETE. Q120 carries the pyrrolidone carboxylic acid modification. Residue L128 is modified to Leucine amide. The propeptide occupies 131–153; it reads ESGEDYFSYGFPKDQEELYTEEQ. 2 positions are modified to leucine amide: L163 and L175. Residues 178–195 constitute a propeptide that is removed on maturation; it reads QLHNIVDKPRQNFNDPRF.

This sequence belongs to the pyrokinin family.

It localises to the secreted. In terms of biological role, a hormone that controls sex pheromone production in females and pheromone responsiveness in male. Also mediates visceral muscle contractile activity (myotropic activity). The chain is PBAN-type neuropeptides from Apis mellifera (Honeybee).